Consider the following 461-residue polypeptide: Chromosomal replication initiator protein DnaA (461 aa).

The interval methionine 1–alanine 84 is domain I, interacts with DnaA modulators. Residues alanine 84–serine 124 are domain II. Positions asparagine 125–alanine 341 are domain III, AAA+ region. Residues glycine 169, glycine 171, lysine 172, and threonine 173 each contribute to the ATP site. The domain IV, binds dsDNA stretch occupies residues asparagine 342–serine 461.

This sequence belongs to the DnaA family. In terms of assembly, oligomerizes as a right-handed, spiral filament on DNA at oriC.

Its subcellular location is the cytoplasm. Its function is as follows. Plays an essential role in the initiation and regulation of chromosomal replication. ATP-DnaA binds to the origin of replication (oriC) to initiate formation of the DNA replication initiation complex once per cell cycle. Binds the DnaA box (a 9 base pair repeat at the origin) and separates the double-stranded (ds)DNA. Forms a right-handed helical filament on oriC DNA; dsDNA binds to the exterior of the filament while single-stranded (ss)DNA is stabiized in the filament's interior. The ATP-DnaA-oriC complex binds and stabilizes one strand of the AT-rich DNA unwinding element (DUE), permitting loading of DNA polymerase. After initiation quickly degrades to an ADP-DnaA complex that is not apt for DNA replication. Binds acidic phospholipids. This chain is Chromosomal replication initiator protein DnaA, found in Shewanella putrefaciens (strain CN-32 / ATCC BAA-453).